Consider the following 284-residue polypeptide: NAD kinase (284 aa).

The active-site Proton acceptor is Asp-70. NAD(+) contacts are provided by residues 70-71 (DG), 139-140 (NE), Lys-167, Asp-169, Leu-177, 180-185 (TAYNLS), and Gln-236.

The protein belongs to the NAD kinase family. The cofactor is a divalent metal cation.

Its subcellular location is the cytoplasm. It carries out the reaction NAD(+) + ATP = ADP + NADP(+) + H(+). In terms of biological role, involved in the regulation of the intracellular balance of NAD and NADP, and is a key enzyme in the biosynthesis of NADP. Catalyzes specifically the phosphorylation on 2'-hydroxyl of the adenosine moiety of NAD to yield NADP. In Helicobacter pylori (strain Shi470), this protein is NAD kinase.